A 146-amino-acid polypeptide reads, in one-letter code: Large ribosomal subunit protein bL9 (146 aa).

This sequence belongs to the bacterial ribosomal protein bL9 family.

Its function is as follows. Binds to the 23S rRNA. The sequence is that of Large ribosomal subunit protein bL9 from Deinococcus geothermalis (strain DSM 11300 / CIP 105573 / AG-3a).